We begin with the raw amino-acid sequence, 243 residues long: 1-(5-phosphoribosyl)-5-[(5-phosphoribosylamino)methylideneamino] imidazole-4-carboxamide isomerase (243 aa).

The active-site Proton acceptor is Asp-8. The active-site Proton donor is the Asp-129.

It belongs to the HisA/HisF family.

Its subcellular location is the cytoplasm. The catalysed reaction is 1-(5-phospho-beta-D-ribosyl)-5-[(5-phospho-beta-D-ribosylamino)methylideneamino]imidazole-4-carboxamide = 5-[(5-phospho-1-deoxy-D-ribulos-1-ylimino)methylamino]-1-(5-phospho-beta-D-ribosyl)imidazole-4-carboxamide. It functions in the pathway amino-acid biosynthesis; L-histidine biosynthesis; L-histidine from 5-phospho-alpha-D-ribose 1-diphosphate: step 4/9. The chain is 1-(5-phosphoribosyl)-5-[(5-phosphoribosylamino)methylideneamino] imidazole-4-carboxamide isomerase from Azorhizobium caulinodans (strain ATCC 43989 / DSM 5975 / JCM 20966 / LMG 6465 / NBRC 14845 / NCIMB 13405 / ORS 571).